Here is a 316-residue protein sequence, read N- to C-terminus: Porphobilinogen deaminase (316 aa).

Cysteine 245 carries the S-(dipyrrolylmethanemethyl)cysteine modification.

It belongs to the HMBS family. In terms of assembly, monomer. Dipyrromethane is required as a cofactor.

It catalyses the reaction 4 porphobilinogen + H2O = hydroxymethylbilane + 4 NH4(+). The protein operates within porphyrin-containing compound metabolism; protoporphyrin-IX biosynthesis; coproporphyrinogen-III from 5-aminolevulinate: step 2/4. It participates in porphyrin-containing compound metabolism; chlorophyll biosynthesis. Functionally, tetrapolymerization of the monopyrrole PBG into the hydroxymethylbilane pre-uroporphyrinogen in several discrete steps. In Synechococcus sp. (strain CC9311), this protein is Porphobilinogen deaminase.